Reading from the N-terminus, the 249-residue chain is Pyridoxamine 5'-phosphate oxidase family protein ustO (249 aa).

A substrate-binding site is contributed by 21–24; that stretch reads LFFV. FMN is bound by residues 76-81, 91-92, arginine 105, and 163-164; these read ATVMFC and RL. 215-217 is a substrate binding site; that stretch reads ASY. Residues 227–247 form a helical membrane-spanning segment; the sequence is TGMALMFLVMVVAQWVGYVLY.

The protein belongs to the pyridoxamine 5'-phosphate oxidase family. Requires FMN as cofactor.

Its subcellular location is the membrane. It participates in mycotoxin biosynthesis. Pyridoxamine 5'-phosphate oxidase family protein; part of the gene cluster that mediates the biosynthesis of the secondary metabolite ustiloxin B, an antimitotic tetrapeptide. First, ustA is processed by the subtilisin-like endoprotease Kex2 that is outside the ustiloxin B gene cluster, at the C-terminal side of Arg-Lys, after transfer to Golgi apparatus through the endoplasmic reticulum (ER). Cleavage by KEX2 generates 16 peptides YAIG-I to YAIG-XVI. To process the precursor peptide further, at least two peptidases are necessary to cleave the N-terminal and C-terminal sides of the Tyr-Ala-Ile-Gly core peptide which serves as backbone for the synthesis of ustiloxin B, through cyclization and modification of the tyrosine with a non-protein coding amino acid, norvaline. One of the two peptidases must be the serine peptidase ustP; and the other pepdidase is probably ustH. Macrocyclization of the core peptide derived from ustA requires the tyrosinase ustQ, as well as the homologous oxidases ustYa and ustYb, and leads to the production of the first cyclization product N-desmethylustiloxin F. For the formation of N-desmethylustiloxin F, three oxidation steps are required, hydroxylation at the benzylic position, hydroxylation at either the aromatic ring of Tyr or beta-position of Ile, and oxidative cyclization. UstQ may catalyze the oxidation of a phenol moiety, whereas the ustYa and ustYb are most likely responsible for the remaining two-step oxidations. N-desmethylustiloxin F is then methylated by ustM to yield ustiloxin F which in turn substrate of the cytochrome P450 monooxygenase ustC which catalyzes the formation of S-deoxyustiloxin H. The flavoprotein monooxygenases ustF1 and ustF2 then participate in the modification of the side chain of S-deoxyustiloxin H, leading to the synthesis of an oxime intermediate, via ustiloxin H. Finally, carboxylative dehydration performed by the cysteine desulfurase-like protein ustD yields ustiloxin B. The protein is Pyridoxamine 5'-phosphate oxidase family protein ustO of Aspergillus flavus (strain ATCC 200026 / FGSC A1120 / IAM 13836 / NRRL 3357 / JCM 12722 / SRRC 167).